Here is a 280-residue protein sequence, read N- to C-terminus: CAG pathogenicity island protein 12 (280 aa).

Positions 1–20 are cleaved as a signal peptide; that stretch reads MKLRASVLIGATILCLILSA. Cysteine 21 carries the N-palmitoyl cysteine lipid modification. The S-diacylglycerol cysteine moiety is linked to residue cysteine 21.

Its subcellular location is the cell membrane. The polypeptide is CAG pathogenicity island protein 12 (cagT) (Helicobacter pylori (strain ATCC 700392 / 26695) (Campylobacter pylori)).